Reading from the N-terminus, the 368-residue chain is Putative J domain-containing protein R445 (368 aa).

Residues 13 to 83 (DLYKILGLTN…KQRNEYNQRL (71 aa)) enclose the J domain.

The chain is Putative J domain-containing protein R445 from Acanthamoeba polyphaga mimivirus (APMV).